We begin with the raw amino-acid sequence, 232 residues long: Lipoprotein-releasing system ATP-binding protein LolD (232 aa).

An ABC transporter domain is found at 11–231; it reads VYLHDIKREY…SLENGHVVEL (221 aa). 47–54 contacts ATP; sequence APSGSGKS.

This sequence belongs to the ABC transporter superfamily. Lipoprotein translocase (TC 3.A.1.125) family. As to quaternary structure, the complex is composed of two ATP-binding proteins (LolD) and two transmembrane proteins (LolC and LolE).

The protein resides in the cell inner membrane. In terms of biological role, part of the ABC transporter complex LolCDE involved in the translocation of mature outer membrane-directed lipoproteins, from the inner membrane to the periplasmic chaperone, LolA. Responsible for the formation of the LolA-lipoprotein complex in an ATP-dependent manner. The chain is Lipoprotein-releasing system ATP-binding protein LolD from Nitrobacter winogradskyi (strain ATCC 25391 / DSM 10237 / CIP 104748 / NCIMB 11846 / Nb-255).